A 428-amino-acid chain; its full sequence is Serine--tRNA ligase (428 aa).

231–233 contributes to the L-serine binding site; it reads TAE. 262–264 lines the ATP pocket; that stretch reads RSE. Residue glutamate 285 coordinates L-serine. ATP is bound at residue 349–352; that stretch reads EISS. Serine 385 lines the L-serine pocket.

It belongs to the class-II aminoacyl-tRNA synthetase family. Type-1 seryl-tRNA synthetase subfamily. Homodimer. The tRNA molecule binds across the dimer.

Its subcellular location is the cytoplasm. It carries out the reaction tRNA(Ser) + L-serine + ATP = L-seryl-tRNA(Ser) + AMP + diphosphate + H(+). It catalyses the reaction tRNA(Sec) + L-serine + ATP = L-seryl-tRNA(Sec) + AMP + diphosphate + H(+). The protein operates within aminoacyl-tRNA biosynthesis; selenocysteinyl-tRNA(Sec) biosynthesis; L-seryl-tRNA(Sec) from L-serine and tRNA(Sec): step 1/1. Functionally, catalyzes the attachment of serine to tRNA(Ser). Is also able to aminoacylate tRNA(Sec) with serine, to form the misacylated tRNA L-seryl-tRNA(Sec), which will be further converted into selenocysteinyl-tRNA(Sec). This Staphylococcus aureus (strain Mu3 / ATCC 700698) protein is Serine--tRNA ligase.